A 777-amino-acid chain; its full sequence is BRCA1-associated RING domain protein 1 (777 aa).

Residues 1–32 form a disordered region; the sequence is MPDNRQPRNRQPRIRSGNEPRSAPAMEPDGRG. The tract at residues 26 to 119 is interaction with BRCA1; the sequence is MEPDGRGAWA…KLRNLLHDNE (94 aa). Residues 50–87 form an RING-type zinc finger; sequence CSRCTNILREPVCLGGCEHIFCSNCVSDCIGTGCPVCY. Glycyl lysine isopeptide (Lys-Gly) (interchain with G-Cter in SUMO2) cross-links involve residues Lys160 and Lys170. A disordered region spans residues 167–211; it reads PAIKKDASAQQDSYEFVSPSPPADVSERAKKASARSGKKQKKKTL. At Ser186 the chain carries Phosphoserine. The span at 197–209 shows a compositional bias: basic residues; the sequence is KASARSGKKQKKK. Thr299 carries the post-translational modification Phosphothreonine. Positions 356–404 are disordered; it reads NIPLPECSSPPSCKRKVGGTSGRKNSNMSDEFISLSPGTPPSTLSSSSY. Residues 389-404 are compositionally biased toward low complexity; that stretch reads SLSPGTPPSTLSSSSY. Ser391 carries the post-translational modification Phosphoserine. Phosphothreonine is present on Thr394. Lys423 participates in a covalent cross-link: Glycyl lysine isopeptide (Lys-Gly) (interchain with G-Cter in SUMO2). ANK repeat units lie at residues 427 to 459, 460 to 492, and 493 to 525; these read RGET…VKDH, AGWT…TTGY, and QNDS…AVNI. Residues 526–546 form an ANK 4; degenerate repeat; that stretch reads FGLRPVDYTDDESMKSLLLLP. Lys548 participates in a covalent cross-link: Glycyl lysine isopeptide (Lys-Gly) (interchain with G-Cter in SUMO2). Residues 554–558 are flexible linker; that stretch reads ASHCS. 2 BRCT domains span residues 560-653 and 667-777; these read MNTG…KYEI and LLPK…PLDS.

Homo- and heterodimer. Heterodimer (RING-type zinc finger) with BRCA1. Heterodimer (via ANK repeats and BRCT domains) with CSTF1/CSTF-50. Component of the BRCA1-A complex, at least composed of the BRCA1, BARD1, UIMC1/RAP80, ABRAXAS1, BRCC3/BRCC36, BABAM2 and BABAM1/NBA1. Interacts with UBXN1. Post-translationally, processed during apoptosis. The homodimer is more susceptible to proteolytic cleavage than the BARD1/BRCA1 heterodimer.

The protein resides in the nucleus. The enzyme catalyses S-ubiquitinyl-[E2 ubiquitin-conjugating enzyme]-L-cysteine + [acceptor protein]-L-lysine = [E2 ubiquitin-conjugating enzyme]-L-cysteine + N(6)-ubiquitinyl-[acceptor protein]-L-lysine.. The protein operates within protein modification; protein ubiquitination. Functionally, E3 ubiquitin-protein ligase. The BRCA1-BARD1 heterodimer specifically mediates the formation of 'Lys-6'-linked polyubiquitin chains and coordinates a diverse range of cellular pathways such as DNA damage repair, ubiquitination and transcriptional regulation to maintain genomic stability. Plays a central role in the control of the cell cycle in response to DNA damage. Acts by mediating ubiquitin E3 ligase activity that is required for its tumor suppressor function. Also forms a heterodimer with CSTF1/CSTF-50 to modulate mRNA processing and RNAP II stability by inhibiting pre-mRNA 3' cleavage. This is BRCA1-associated RING domain protein 1 (BARD1) from Homo sapiens (Human).